A 399-amino-acid polypeptide reads, in one-letter code: MIKKELPDEFGHFGPYGGMFVADTLVHALKQLEHAYTKYRNDQDFLSELHTELKDYVGRPNPLYHAVHLSKKIGGAQIYLKREDLNHTGAHKINNTIGQALLAKRMGKTRVIAETGAGQHGVATATVAAKFGFQCVVYMGSEDIKRQSSNVYRMKLLGAEVVPVTSGSKTLKDALNEALRDWVSHVDDTFYIIGTVAGPHPYPQMVRDFQAIIGVEARAQHMEKTGRLPDALVACVGGGSNAIGLFYPFLNDQSVMIYGVEAGGKGIETGEHSASLIAGKPGVLHGNRTYLLCDEYGQVKDTHSVSAGLDYPGVGPEHAYLKDTGRVIYKAINDSEALDAFRLLTHTEGIIPALESSHAVAYAIQLAKTMSKEQSIIVNLSGRGDKDMHTVAAIDGITI.

Residue Lys-92 is modified to N6-(pyridoxal phosphate)lysine.

Belongs to the TrpB family. Tetramer of two alpha and two beta chains. The cofactor is pyridoxal 5'-phosphate.

It carries out the reaction (1S,2R)-1-C-(indol-3-yl)glycerol 3-phosphate + L-serine = D-glyceraldehyde 3-phosphate + L-tryptophan + H2O. The protein operates within amino-acid biosynthesis; L-tryptophan biosynthesis; L-tryptophan from chorismate: step 5/5. In terms of biological role, the beta subunit is responsible for the synthesis of L-tryptophan from indole and L-serine. This Legionella pneumophila (strain Paris) protein is Tryptophan synthase beta chain.